Here is a 134-residue protein sequence, read N- to C-terminus: Large ribosomal subunit protein uL18 (134 aa).

The segment at 1 to 25 is disordered; the sequence is MSNTAQNEKRLPVGKDISTRRRTAR. Basic and acidic residues predominate over residues 7 to 19; that stretch reads NEKRLPVGKDIST.

The protein belongs to the universal ribosomal protein uL18 family. Part of the 50S ribosomal subunit; part of the 5S rRNA/L5/L18/L25 subcomplex. Contacts the 5S and 23S rRNAs.

This is one of the proteins that bind and probably mediate the attachment of the 5S RNA into the large ribosomal subunit, where it forms part of the central protuberance. This is Large ribosomal subunit protein uL18 from Corynebacterium jeikeium (strain K411).